We begin with the raw amino-acid sequence, 150 residues long: Cilia- and flagella-associated protein 68 (150 aa).

Mn regions lie at residues 99 to 110 and 140 to 150; these read TTYDTSYNNKMP and KSTYMNSYSKP.

This sequence belongs to the CFAP68 family. Microtubule inner protein component of sperm flagellar doublet microtubules.

It is found in the cytoplasm. The protein resides in the cytoskeleton. Its subcellular location is the cilium axoneme. The protein localises to the flagellum axoneme. It localises to the nucleus. It is found in the cell projection. The protein resides in the cilium. Microtubule inner protein (MIP) part of the dynein-decorated doublet microtubules (DMTs) in cilia axoneme, which is required for motile cilia beating. This Homo sapiens (Human) protein is Cilia- and flagella-associated protein 68.